Consider the following 105-residue polypeptide: Replication initiation control protein YabA (105 aa).

Residues H79, C81, C95, and C98 each coordinate Zn(2+).

The protein belongs to the YabA family. In terms of assembly, homotetramer. Interacts with both DnaA and DnaN, acting as a bridge between these two proteins. Zn(2+) serves as cofactor.

The protein localises to the cytoplasm. The protein resides in the nucleoid. Its function is as follows. Involved in control of chromosome replication initiation. Inhibits the cooperative binding of DnaA to the oriC region, thus negatively regulating initiation of chromosome replication. Inhibits the ability of DnaA-ATP to form a helix on DNA; does not disassemble preformed DnaA-DNA helices. Decreases the residence time of DnaA on the chromosome at its binding sites (oriC, replication forks and promoter-binding sites). Tethers DnaA to the replication machinery via the DNA polymerase beta sliding clamp subunit (dnaN). Associates with oriC and other DnaA targets on the chromosome in a DnaA-dependent manner. The chain is Replication initiation control protein YabA from Streptococcus pneumoniae serotype 2 (strain D39 / NCTC 7466).